Reading from the N-terminus, the 310-residue chain is Tagatose-6-phosphate kinase (310 aa).

The protein belongs to the carbohydrate kinase PfkB family. LacC subfamily.

The catalysed reaction is D-tagatofuranose 6-phosphate + ATP = D-tagatofuranose 1,6-bisphosphate + ADP + H(+). It participates in carbohydrate metabolism; D-tagatose 6-phosphate degradation; D-glyceraldehyde 3-phosphate and glycerone phosphate from D-tagatose 6-phosphate: step 1/2. This Streptococcus uberis (strain ATCC BAA-854 / 0140J) protein is Tagatose-6-phosphate kinase.